We begin with the raw amino-acid sequence, 220 residues long: Casparian strip membrane protein 4 (220 aa).

The disordered stretch occupies residues 1 to 39 (MDSRREVEESSTAPILESKRTRSNGKGKSIDGDHSPPHA). Residues 1–60 (MDSRREVEESSTAPILESKRTRSNGKGKSIDGDHSPPHAATVVTTKATPLQKGGMKKGIA) are Cytoplasmic-facing. The helical transmembrane segment at 61–81 (ILDFILRLGAIGAALGAAVIM) threads the bilayer. Topologically, residues 82 to 108 (GTNEQILPFFTQFLQFHAQWDDFPMFK) are extracellular. A helical membrane pass occupies residues 109–129 (FFVVANGAAAGFLILSLPFSI). At 130 to 141 (VCIVRPLAAGPR) the chain is on the cytoplasmic side. Residues 142 to 162 (FLLVIVDLVLMALVVAAASSA) traverse the membrane as a helical segment. Residues 163–194 (AAVVYLAHNGSQDANWNAICQQFTDFCQGSSL) are Extracellular-facing. A glycan (N-linked (GlcNAc...) asparagine) is linked at Asn171. A helical membrane pass occupies residues 195 to 215 (AVVASFVASVFLACLVVVSSV). Residues 216-220 (ALKRT) lie on the Cytoplasmic side of the membrane.

It belongs to the Casparian strip membrane proteins (CASP) family. Homodimer and heterodimers.

It is found in the cell membrane. Regulates membrane-cell wall junctions and localized cell wall deposition. Required for establishment of the Casparian strip membrane domain (CSD) and the subsequent formation of Casparian strips, a cell wall modification of the root endodermis that determines an apoplastic barrier between the intraorganismal apoplasm and the extraorganismal apoplasm and prevents lateral diffusion. This is Casparian strip membrane protein 4 from Medicago truncatula (Barrel medic).